A 124-amino-acid polypeptide reads, in one-letter code: Small ribosomal subunit protein uS12 (124 aa).

D89 is subject to 3-methylthioaspartic acid.

Belongs to the universal ribosomal protein uS12 family. In terms of assembly, part of the 30S ribosomal subunit. Contacts proteins S8 and S17. May interact with IF1 in the 30S initiation complex.

With S4 and S5 plays an important role in translational accuracy. Its function is as follows. Interacts with and stabilizes bases of the 16S rRNA that are involved in tRNA selection in the A site and with the mRNA backbone. Located at the interface of the 30S and 50S subunits, it traverses the body of the 30S subunit contacting proteins on the other side and probably holding the rRNA structure together. The combined cluster of proteins S8, S12 and S17 appears to hold together the shoulder and platform of the 30S subunit. In Psychrobacter arcticus (strain DSM 17307 / VKM B-2377 / 273-4), this protein is Small ribosomal subunit protein uS12.